The sequence spans 949 residues: Inactive atromentin synthetase invA3 (949 aa).

The segment at 38–460 is adenylation (A) domain; sequence RAVSQYPNHE…SGRIKDTVVV (423 aa). Residues 592-670 enclose the Carrier domain; sequence ALSTETEKTL…NLAKYVDSLV (79 aa). Positions 597-667 are thiolation and peptide carrier (T) domain; it reads TEKTLAGIYA…VISNLAKYVD (71 aa). At S629 the chain carries O-(pantetheine 4'-phosphoryl)serine. The segment at 693 to 934 is thioesterase (TE) domain; sequence PIFMVHPGMA…YTLMDFDHVA (242 aa).

Belongs to the ATP-dependent AMP-binding enzyme family.

In terms of biological role, inactive atromentin synthetase homolog. While the invA3 adenylation (A) domain is capable of adenylating 4-hydroxyphenylpyruvate (4-HPP), the invA3 enzyme is inactive because of its non-functional thioesterase (TE) domain. The chain is Inactive atromentin synthetase invA3 (invA3) from Paxillus involutus (Naked brimcap).